Here is a 66-residue protein sequence, read N- to C-terminus: ATP synthase subunit c (66 aa).

2 consecutive transmembrane segments (helical) span residues 3 to 23 and 45 to 65; these read LTFFGLCLACMGVSLAEGMLM and IMGIAFIEGTFLVTLVFSFVI.

This sequence belongs to the ATPase C chain family. F-type ATPases have 2 components, F(1) - the catalytic core - and F(0) - the membrane proton channel. F(1) has five subunits: alpha(3), beta(3), gamma(1), delta(1), epsilon(1). F(0) has three main subunits: a(1), b(2) and c(10-14). The alpha and beta chains form an alternating ring which encloses part of the gamma chain. F(1) is attached to F(0) by a central stalk formed by the gamma and epsilon chains, while a peripheral stalk is formed by the delta and b chains.

The protein localises to the cell membrane. F(1)F(0) ATP synthase produces ATP from ADP in the presence of a proton or sodium gradient. F-type ATPases consist of two structural domains, F(1) containing the extramembraneous catalytic core and F(0) containing the membrane proton channel, linked together by a central stalk and a peripheral stalk. During catalysis, ATP synthesis in the catalytic domain of F(1) is coupled via a rotary mechanism of the central stalk subunits to proton translocation. In terms of biological role, key component of the F(0) channel; it plays a direct role in translocation across the membrane. A homomeric c-ring of between 10-14 subunits forms the central stalk rotor element with the F(1) delta and epsilon subunits. In Streptococcus oralis, this protein is ATP synthase subunit c (atpE).